Here is a 249-residue protein sequence, read N- to C-terminus: Ubiquinone biosynthesis protein COQ4 homolog, mitochondrial (249 aa).

Residues H134, D135, H138, and E150 each coordinate Zn(2+).

Belongs to the COQ4 family. Component of a multi-subunit COQ enzyme complex. Zn(2+) is required as a cofactor.

The protein resides in the mitochondrion inner membrane. It catalyses the reaction a 4-hydroxy-3-methoxy-5-(all-trans-polyprenyl)benzoate + H(+) = a 2-methoxy-6-(all-trans-polyprenyl)phenol + CO2. It participates in cofactor biosynthesis; ubiquinone biosynthesis. Lyase that catalyzes the C1-decarboxylation of 4-hydroxy-3-methoxy-5-(all-trans-polyprenyl)benzoic acid into 2-methoxy-6-(all-trans-polyprenyl)phenol during ubiquinone biosynthesis. This Trypanosoma brucei brucei (strain 927/4 GUTat10.1) protein is Ubiquinone biosynthesis protein COQ4 homolog, mitochondrial.